Consider the following 1149-residue polypeptide: Protogenin A (1149 aa).

Positions 1-23 (MASFKRDLYLFLAVFLSISGVWS) are cleaved as a signal peptide. Residues 24-932 (FSELFFIKEP…GFYHLDQRSM (909 aa)) lie on the Extracellular side of the membrane. Ig-like domains are found at residues 27 to 117 (LFFI…ARLT), 122 to 209 (STFT…ATLT), 222 to 309 (PRII…ANIT), and 314 to 399 (PSLV…RLIV). Disulfide bonds link Cys48–Cys100 and Cys143–Cys192. Asn78 carries an N-linked (GlcNAc...) asparagine glycan. Asn230 is a glycosylation site (N-linked (GlcNAc...) asparagine). Cysteines 243 and 291 form a disulfide. Asn300 and Asn307 each carry an N-linked (GlcNAc...) asparagine glycan. The cysteines at positions 335 and 382 are disulfide-linked. Fibronectin type-III domains are found at residues 408–502 (APRN…TLED), 504–600 (PLRA…TPKA), 605–704 (VPLA…VRDR), 711–804 (PPHH…TLPE), and 809–905 (APVG…IHTD). Residues Asn460 and Asn475 are each glycosylated (N-linked (GlcNAc...) asparagine). Asn617 is a glycosylation site (N-linked (GlcNAc...) asparagine). The disordered stretch occupies residues 646–666 (GQSEAAQAQIPPHHRQHTIGG). Asn720, Asn741, and Asn753 each carry an N-linked (GlcNAc...) asparagine glycan. A helical transmembrane segment spans residues 933-953 (AGIAVGVCIALTCIIICILIL). Topologically, residues 954-1149 (ACRSKTRKSC…EQEMTDLHPV (196 aa)) are cytoplasmic. Residues 1060–1149 (YTETSPENPP…EQEMTDLHPV (90 aa)) are disordered. Residues 1061 to 1073 (TETSPENPPTTLQ) are compositionally biased toward polar residues. Basic and acidic residues predominate over residues 1084 to 1106 (EGSHSSEGSHETSDSGRYSHDDT).

This sequence belongs to the immunoglobulin superfamily. DCC family. As to expression, expression begins in the posterior region of the embryo and this posterior restriction persists at the 4 s stage. At early somite stages, expressed along the neural tube with lower levels in the lateral and paraxial mesoderm. Expression decreases caudally and rostrally becomes restricted to the ventral part of the brain. Widespread in the spinal cord at 30 hours post-fertilization (hpf) and is also expressed in the lens from this time. At 40 hpf, expression is restricted to the lens.

It localises to the membrane. Functionally, may play a role in anteroposterior axis elongation. The chain is Protogenin A from Danio rerio (Zebrafish).